Consider the following 504-residue polypeptide: Aspartyl/glutamyl-tRNA(Asn/Gln) amidotransferase subunit B (504 aa).

The protein belongs to the GatB/GatE family. GatB subfamily. In terms of assembly, heterotrimer of A, B and C subunits.

It carries out the reaction L-glutamyl-tRNA(Gln) + L-glutamine + ATP + H2O = L-glutaminyl-tRNA(Gln) + L-glutamate + ADP + phosphate + H(+). The catalysed reaction is L-aspartyl-tRNA(Asn) + L-glutamine + ATP + H2O = L-asparaginyl-tRNA(Asn) + L-glutamate + ADP + phosphate + 2 H(+). Functionally, allows the formation of correctly charged Asn-tRNA(Asn) or Gln-tRNA(Gln) through the transamidation of misacylated Asp-tRNA(Asn) or Glu-tRNA(Gln) in organisms which lack either or both of asparaginyl-tRNA or glutaminyl-tRNA synthetases. The reaction takes place in the presence of glutamine and ATP through an activated phospho-Asp-tRNA(Asn) or phospho-Glu-tRNA(Gln). This chain is Aspartyl/glutamyl-tRNA(Asn/Gln) amidotransferase subunit B, found in Tropheryma whipplei (strain TW08/27) (Whipple's bacillus).